A 113-amino-acid polypeptide reads, in one-letter code: FK506-binding protein 1B (113 aa).

The PPIase FKBP-type domain maps to 19–113; the sequence is GQTVVIEYTG…IFDVYLKGLQ (95 aa).

Belongs to the FKBP-type PPIase family. FKBP1 subfamily.

It is found in the cytoplasm. It catalyses the reaction [protein]-peptidylproline (omega=180) = [protein]-peptidylproline (omega=0). Inhibited by both FK506 and rapamycin. Its function is as follows. PPIases accelerate the folding of proteins. It catalyzes the cis-trans isomerization of proline imidic peptide bonds in oligopeptides. The chain is FK506-binding protein 1B (fkr-3) from Neurospora crassa (strain ATCC 24698 / 74-OR23-1A / CBS 708.71 / DSM 1257 / FGSC 987).